We begin with the raw amino-acid sequence, 59 residues long: MGIIKFLKNVGKEMKKVTWPKGKELTRYTITVITTVIFFAIFFALIDSGITQLIRLIVE.

A helical transmembrane segment spans residues 30-50 (ITVITTVIFFAIFFALIDSGI).

This sequence belongs to the SecE/SEC61-gamma family. As to quaternary structure, component of the Sec protein translocase complex. Heterotrimer consisting of SecY, SecE and SecG subunits. The heterotrimers can form oligomers, although 1 heterotrimer is thought to be able to translocate proteins. Interacts with the ribosome. Interacts with SecDF, and other proteins may be involved. Interacts with SecA.

The protein localises to the cell membrane. Functionally, essential subunit of the Sec protein translocation channel SecYEG. Clamps together the 2 halves of SecY. May contact the channel plug during translocation. This chain is Protein translocase subunit SecE, found in Bacillus licheniformis.